The sequence spans 431 residues: Selenocysteine lyase (431 aa).

N6-(pyridoxal phosphate)lysine is present on lysine 239. The active-site S-selanylcysteine intermediate is cysteine 367.

This sequence belongs to the class-V pyridoxal-phosphate-dependent aminotransferase family. As to quaternary structure, homodimer. Pyridoxal 5'-phosphate is required as a cofactor.

Its subcellular location is the cytoplasm. It is found in the cytosol. The enzyme catalyses L-selenocysteine + AH2 = hydrogenselenide + L-alanine + A + H(+). Its function is as follows. Catalyzes the decomposition of L-selenocysteine to L-alanine and elemental selenium. The sequence is that of Selenocysteine lyase (scly) from Xenopus tropicalis (Western clawed frog).